The following is a 272-amino-acid chain: HMP-PP phosphatase (272 aa).

The Nucleophile role is filled by D8. Mg(2+)-binding residues include D8, D10, and D212.

The protein belongs to the HAD-like hydrolase superfamily. Cof family. Requires Mg(2+) as cofactor.

The catalysed reaction is 4-amino-2-methyl-5-(diphosphooxymethyl)pyrimidine + H2O = 4-amino-2-methyl-5-(phosphooxymethyl)pyrimidine + phosphate + H(+). Functionally, catalyzes the hydrolysis of 4-amino-2-methyl-5-hydroxymethylpyrimidine pyrophosphate (HMP-PP) to 4-amino-2-methyl-5-hydroxymethylpyrimidine phosphate (HMP-P). This Salmonella typhi protein is HMP-PP phosphatase.